Consider the following 506-residue polypeptide: Dual specificity protein kinase shkC (506 aa).

The disordered stretch occupies residues 1 to 21 (MDSGLGSSYPEERSGPPEIRP). Residues 10–21 (PEERSGPPEIRP) are compositionally biased toward basic and acidic residues. Residues 24-284 (INFEELIGTG…IISALDHVII (261 aa)) enclose the Protein kinase domain. ATP-binding positions include 30 to 38 (IGTGSFGKV) and Lys51. Asp147 serves as the catalytic Proton acceptor. The region spanning 396–488 (WFHGDLDTTE…KLDSQLGVPN (93 aa)) is the SH2 domain.

Belongs to the protein kinase superfamily. TKL Ser/Thr protein kinase family. SH2 domain-containing protein kinase subfamily.

The protein resides in the membrane. It carries out the reaction L-seryl-[protein] + ATP = O-phospho-L-seryl-[protein] + ADP + H(+). The catalysed reaction is L-threonyl-[protein] + ATP = O-phospho-L-threonyl-[protein] + ADP + H(+). In terms of biological role, required for proper chemotaxis and phagocytosis; proper spatiotemporal control of F-actin levels in chemotaxing cells. Negative regulator of the PI3K (phosphatidylinositol 3 kinase) pathway. Predominantly phosphorylates serines and threonines and tyrosines at a lower level. This is Dual specificity protein kinase shkC (shkC) from Dictyostelium discoideum (Social amoeba).